We begin with the raw amino-acid sequence, 291 residues long: Ribosomal RNA small subunit methyltransferase H (291 aa).

Residues 31–33 (GGY), Asp49, Phe76, Asp97, and Gln104 each bind S-adenosyl-L-methionine.

It belongs to the methyltransferase superfamily. RsmH family.

The protein localises to the cytoplasm. The enzyme catalyses cytidine(1402) in 16S rRNA + S-adenosyl-L-methionine = N(4)-methylcytidine(1402) in 16S rRNA + S-adenosyl-L-homocysteine + H(+). Functionally, specifically methylates the N4 position of cytidine in position 1402 (C1402) of 16S rRNA. The polypeptide is Ribosomal RNA small subunit methyltransferase H (Anaplasma marginale (strain St. Maries)).